We begin with the raw amino-acid sequence, 429 residues long: ATP-sensitive inward rectifier potassium channel 12 (429 aa).

The Cytoplasmic segment spans residues 1-76; the sequence is MTAGRVNPYS…IADMFTTCVD (76 aa). The chain crosses the membrane as a helical span at residues 77 to 103; it reads IRWRYMLLLFSLAFLVSWLLFGLIFWL. 2 residues coordinate a 1,2-diacyl-sn-glycero-3-phospho-(1D-myo-inositol-4,5-bisphosphate): Arg78 and Arg80. Residues 104-129 are Extracellular-facing; that stretch reads IALIHGDLENPGGDDTFKPCVLQVNG. A disulfide bond links Cys123 and Cys155. The helical; Pore-forming intramembrane region spans 130–146; it reads FVAAFLFSIETQTTIGY. K(+) is bound by residues Thr143, Ile144, Gly145, and Tyr146. The Selectivity filter signature appears at 143-148; sequence TIGYGF. Over 147–155 the chain is Extracellular; that stretch reads GFRCVTEEC. Residues 156-183 traverse the membrane as a helical segment; that stretch reads PLAVFMVVVQSIVGCIIDSFMIGAIMAK. A 1,2-diacyl-sn-glycero-3-phospho-(1D-myo-inositol-4,5-bisphosphate)-binding residues include Lys183 and Lys188. The Cytoplasmic segment spans residues 184–429; the sequence is MARPKKRAQT…QRSYRRESEI (246 aa). Residues 386-407 form a disordered region; it reads RDEDEEDDDSRGLDDLSPDNRH. The segment covering 395 to 407 has biased composition (basic and acidic residues); the sequence is SRGLDDLSPDNRH.

The protein belongs to the inward rectifier-type potassium channel family. In terms of assembly, homotetramer.

The protein localises to the membrane. It is found in the cell membrane. The protein resides in the sarcolemma. It localises to the T-tubule. The catalysed reaction is K(+)(in) = K(+)(out). Activated by phosphatidylinositol 4,5-bisphosphate (PtdIns(4,5)P2). PtdIns(4,5)P2 binding to the cytoplasmic side of the channel triggers a conformation change leading to channel opening. In terms of biological role, inward rectifying potassium channel that probably participates in controlling the resting membrane potential in electrically excitable cells. Probably participates in establishing action potential waveform and excitability of neuronal and muscle tissues. Inward rectifier potassium channels are characterized by a greater tendency to allow potassium to flow into the cell rather than out of it. Their voltage dependence is regulated by the concentration of extracellular potassium; as external potassium is raised, the voltage range of the channel opening shifts to more positive voltages. The inward rectification is mainly due to the blockage of outward current by internal magnesium. This is ATP-sensitive inward rectifier potassium channel 12 (KCNJ12) from Gallus gallus (Chicken).